A 194-amino-acid chain; its full sequence is Ras-like protein rasS (194 aa).

A GTP-binding site is contributed by 10 to 17 (GPGGVGKS). Residues 32–40 (YDPTLEDSY) carry the Effector region motif. Residues 57 to 61 (DTAGQ) and 116 to 119 (NKCD) contribute to the GTP site. Residues 168–194 (RQSNQHSNSQEQNTDQPIKKKKSCNLL) are disordered. Positions 169–180 (QSNQHSNSQEQN) are enriched in low complexity. Cys-191 is modified (cysteine methyl ester). Residue Cys-191 is the site of S-geranylgeranyl cysteine attachment. A propeptide spans 192–194 (NLL) (removed in mature form).

The protein belongs to the small GTPase superfamily. Ras family.

The protein resides in the cell membrane. The enzyme catalyses GTP + H2O = GDP + phosphate + H(+). Functionally, ras proteins bind GDP/GTP and possess intrinsic GTPase activity. This is Ras-like protein rasS (rasS) from Dictyostelium discoideum (Social amoeba).